We begin with the raw amino-acid sequence, 194 residues long: 7-methyl-GTP pyrophosphatase (194 aa).

Asp69 (proton acceptor) is an active-site residue.

The protein belongs to the Maf family. YceF subfamily. A divalent metal cation is required as a cofactor.

It localises to the cytoplasm. It carries out the reaction N(7)-methyl-GTP + H2O = N(7)-methyl-GMP + diphosphate + H(+). Nucleoside triphosphate pyrophosphatase that hydrolyzes 7-methyl-GTP (m(7)GTP). May have a dual role in cell division arrest and in preventing the incorporation of modified nucleotides into cellular nucleic acids. The protein is 7-methyl-GTP pyrophosphatase (yceF1) of Salmonella paratyphi A (strain ATCC 9150 / SARB42).